The sequence spans 791 residues: Endonuclease MutS2 (791 aa).

337-344 (GPNTGGKT) serves as a coordination point for ATP. Positions 689–715 (AAQASQKKPEKSVRSSRGLRSSRASSE) are disordered. Residues 703–713 (SSRGLRSSRAS) show a composition bias toward low complexity. A Smr domain is found at 716 to 791 (LDLRGQRYEE…GTGATIVNLQ (76 aa)).

Belongs to the DNA mismatch repair MutS family. MutS2 subfamily. Homodimer. Binds to stalled ribosomes, contacting rRNA.

Endonuclease that is involved in the suppression of homologous recombination and thus may have a key role in the control of bacterial genetic diversity. Its function is as follows. Acts as a ribosome collision sensor, splitting the ribosome into its 2 subunits. Detects stalled/collided 70S ribosomes which it binds and splits by an ATP-hydrolysis driven conformational change. Acts upstream of the ribosome quality control system (RQC), a ribosome-associated complex that mediates the extraction of incompletely synthesized nascent chains from stalled ribosomes and their subsequent degradation. Probably generates substrates for RQC. This Lactobacillus gasseri (strain ATCC 33323 / DSM 20243 / BCRC 14619 / CIP 102991 / JCM 1131 / KCTC 3163 / NCIMB 11718 / NCTC 13722 / AM63) protein is Endonuclease MutS2.